The primary structure comprises 157 residues: Ribosome maturation factor RimM (157 aa).

In terms of domain architecture, PRC barrel spans 89 to 156; it reads PGEYYHVDLI…DRLLIDPEFV (68 aa).

This sequence belongs to the RimM family. In terms of assembly, binds ribosomal protein uS19.

It is found in the cytoplasm. Its function is as follows. An accessory protein needed during the final step in the assembly of 30S ribosomal subunit, possibly for assembly of the head region. Essential for efficient processing of 16S rRNA. May be needed both before and after RbfA during the maturation of 16S rRNA. It has affinity for free ribosomal 30S subunits but not for 70S ribosomes. This Rhizorhabdus wittichii (strain DSM 6014 / CCUG 31198 / JCM 15750 / NBRC 105917 / EY 4224 / RW1) (Sphingomonas wittichii) protein is Ribosome maturation factor RimM.